The primary structure comprises 417 residues: Tyrosine--tRNA ligase (417 aa).

Tyr39 serves as a coordination point for L-tyrosine. The 'HIGH' region motif lies at Ala44–Asn53. L-tyrosine contacts are provided by Tyr176 and Gln180. The 'KMSKS' region motif lies at Lys236–Ser240. Lys239 contributes to the ATP binding site. In terms of domain architecture, S4 RNA-binding spans Ile350–Pro416.

It belongs to the class-I aminoacyl-tRNA synthetase family. TyrS type 1 subfamily. In terms of assembly, homodimer.

It localises to the cytoplasm. It catalyses the reaction tRNA(Tyr) + L-tyrosine + ATP = L-tyrosyl-tRNA(Tyr) + AMP + diphosphate + H(+). In terms of biological role, catalyzes the attachment of tyrosine to tRNA(Tyr) in a two-step reaction: tyrosine is first activated by ATP to form Tyr-AMP and then transferred to the acceptor end of tRNA(Tyr). In Mesorhizobium japonicum (strain LMG 29417 / CECT 9101 / MAFF 303099) (Mesorhizobium loti (strain MAFF 303099)), this protein is Tyrosine--tRNA ligase.